A 522-amino-acid chain; its full sequence is Peptide chain release factor 3 (522 aa).

The 268-residue stretch at 10-277 (ASRKTFAIIS…TFVDFAPSPS (268 aa)) folds into the tr-type G domain. GTP contacts are provided by residues 19 to 26 (SHPDAGKT), 87 to 91 (DTPGH), and 141 to 144 (NKMD).

Belongs to the TRAFAC class translation factor GTPase superfamily. Classic translation factor GTPase family. PrfC subfamily.

The protein localises to the cytoplasm. In terms of biological role, increases the formation of ribosomal termination complexes and stimulates activities of RF-1 and RF-2. It binds guanine nucleotides and has strong preference for UGA stop codons. It may interact directly with the ribosome. The stimulation of RF-1 and RF-2 is significantly reduced by GTP and GDP, but not by GMP. This is Peptide chain release factor 3 from Listeria monocytogenes serotype 4b (strain F2365).